The primary structure comprises 180 residues: ATP-dependent protease subunit HslV (180 aa).

The active site involves Thr5. Na(+) is bound by residues Gly165, Cys168, and Thr171.

It belongs to the peptidase T1B family. HslV subfamily. A double ring-shaped homohexamer of HslV is capped on each side by a ring-shaped HslU homohexamer. The assembly of the HslU/HslV complex is dependent on binding of ATP.

It is found in the cytoplasm. The enzyme catalyses ATP-dependent cleavage of peptide bonds with broad specificity.. Allosterically activated by HslU binding. Protease subunit of a proteasome-like degradation complex believed to be a general protein degrading machinery. The polypeptide is ATP-dependent protease subunit HslV (Helicobacter hepaticus (strain ATCC 51449 / 3B1)).